A 193-amino-acid polypeptide reads, in one-letter code: MPEIRQLSEGIFEVTKDKKQLSTLNLDPGKVVYGEKLISVEGDEYRTWDPRRSKLGAMVLKKFDIPLKRNSKVLYLGAASGTTVSHVSDIVSEGAVYSVEFAPRSMRDFIGLASRRKNIFPILADAGKPDSYAHIVEPVDVIFQDVAQPNQAEIAARNAVRFLKKDGYLLLSIKARSIDTAASPKEIFKEEVK.

Residues 82–83, 100–101, 125–126, and 145–148 contribute to the S-adenosyl-L-methionine site; these read TT, EF, DA, and DVAQ.

Belongs to the methyltransferase superfamily. Fibrillarin family. In terms of assembly, interacts with nop5. Component of box C/D small ribonucleoprotein (sRNP) particles that contain rpl7ae, FlpA and nop5, plus a guide RNA.

In terms of biological role, involved in pre-rRNA and tRNA processing. Utilizes the methyl donor S-adenosyl-L-methionine to catalyze the site-specific 2'-hydroxyl methylation of ribose moieties in rRNA and tRNA. Site specificity is provided by a guide RNA that base pairs with the substrate. Methylation occurs at a characteristic distance from the sequence involved in base pairing with the guide RNA. In Methanosarcina mazei (Methanosarcina frisia), this protein is Fibrillarin-like rRNA/tRNA 2'-O-methyltransferase.